We begin with the raw amino-acid sequence, 554 residues long: GPI transamidase component PIG-S homolog (554 aa).

At 1 to 73 (MSPCKWLTMF…LNKPEKSLKR (73 aa)) the chain is on the cytoplasmic side. Residues 74–94 (YALLSFYVIILLAIPVWWKTT) form a helical membrane-spanning segment. Residues 95–511 (HYERSSLPFE…VTTIYFPDES (417 aa)) are Lumenal-facing. N-linked (GlcNAc...) asparagine glycosylation is found at Asn-132 and Asn-375. A helical membrane pass occupies residues 512–532 (KYGIYAPLFAPILIPLLISFI). At 533 to 554 (KEVKDMLRERKLHRVANVPKPN) the chain is on the cytoplasmic side.

It belongs to the PIGS family. In terms of assembly, forms a complex with PIG-T homolog, PIG-U homolog and GPI8.

The protein resides in the endoplasmic reticulum membrane. The protein operates within glycolipid biosynthesis; glycosylphosphatidylinositol-anchor biosynthesis. Its function is as follows. Component of the GPI transamidase complex. Involved in transfer of GPI to proteins. The protein is GPI transamidase component PIG-S homolog (gpi17) of Schizosaccharomyces pombe (strain 972 / ATCC 24843) (Fission yeast).